The following is a 103-amino-acid chain: Small ribosomal subunit protein uS10 (103 aa).

It belongs to the universal ribosomal protein uS10 family. Part of the 30S ribosomal subunit.

Involved in the binding of tRNA to the ribosomes. The polypeptide is Small ribosomal subunit protein uS10 (Neisseria meningitidis serogroup C / serotype 2a (strain ATCC 700532 / DSM 15464 / FAM18)).